The chain runs to 1163 residues: Zinc finger protein 516 (1163 aa).

A compositionally biased stretch (basic and acidic residues) spans 1–13 (MDRNREAEMELRR). The tract at residues 1-26 (MDRNREAEMELRRGPSPTRAGRGHEV) is disordered. The mediates promoter DNA-binding and activation of transcription stretch occupies residues 1–431 (MDRNREAEME…ATRGKVAEPA (431 aa)). 7 C2H2-type zinc fingers span residues 34–56 (HTCC…MRKH), 62–84 (YKCP…IRSH), 174–197 (VQCS…HQAH), 200–223 (FKCR…ERDH), 248–270 (FPCE…MKKH), 276–298 (HGCH…MKAH), and 335–357 (EVCA…NAIH). A compositionally biased stretch (basic and acidic residues) spans 460–469 (SQEKRKREQD). Disordered stretches follow at residues 460 to 512 (SQEK…TGQG), 533 to 667 (HSRV…QEQH), and 679 to 730 (HPKQ…APDL). Residues 496–507 (RSAARPNRRAAA) are compositionally biased toward low complexity. A C2H2-type 8 zinc finger spans residues 515–537 (SECFECGKIFRTYHQMVLHSRVH). A compositionally biased stretch (basic and acidic residues) spans 542 to 552 (RERDSDGDRAA). Residues 561–572 (EGDSASQPSSPG) are compositionally biased toward polar residues. Over residues 588–598 (EAAEDSGEEGA) the composition is skewed to acidic residues. Positions 615-625 (EVTSTELSSGD) are enriched in polar residues. Residues 626–641 (QSHKMGDNASERDTGE) show a composition bias toward basic and acidic residues. Lysine 643 is covalently cross-linked (Glycyl lysine isopeptide (Lys-Gly) (interchain with G-Cter in SUMO2)). Positions 656–667 (SSRETSRRQEQH) are enriched in basic and acidic residues. A Glycyl lysine isopeptide (Lys-Gly) (interchain with G-Cter in SUMO2) cross-link involves residue lysine 681. Over residues 706 to 720 (PAEKLSDLHNKEHSG) the composition is skewed to basic and acidic residues. The C2H2-type 9; atypical zinc finger occupies 760 to 783 (HPCPYCSHKTYYPEVLWMHKRIWH). Residues 838-1007 (TQVPGGMPGS…PPREPPSKAA (170 aa)) form a disordered region. Over residues 840–857 (VPGGMPGSKSGSSPLGVV) the composition is skewed to low complexity. Glycyl lysine isopeptide (Lys-Gly) (interchain with G-Cter in SUMO2) cross-links involve residues lysine 1043 and lysine 1062. The C2H2-type 10 zinc finger occupies 1098 to 1120 (FVCIECGKSFHQPGHLRAHMRAH). The disordered stretch occupies residues 1126–1163 (SDGPRGSEVHTTSADAPKQGRDHSNTGTVQTVPLRKGT).

This sequence belongs to the krueppel C2H2-type zinc-finger protein family. As to quaternary structure, interacts with PRDM16; the interaction is direct and may play a role in the transcription of brown adipose tissue-specific genes. Interacts with PWWP2B. Interacts with HDAC1; this interaction is enhanced in the presence of PWWP2B.

Its subcellular location is the nucleus. Its function is as follows. Transcriptional regulator that binds to the promoter and activates the transcription of genes promoting brown adipose tissue (BAT) differentiation. Among brown adipose tissue-specific genes, binds the proximal region of the promoter of the UCP1 gene to activate its transcription and thereby regulate thermogenesis. May also play a role in the cellular response to replication stress. This Homo sapiens (Human) protein is Zinc finger protein 516.